We begin with the raw amino-acid sequence, 116 residues long: Ribosome-binding factor A (116 aa).

Belongs to the RbfA family. Monomer. Binds 30S ribosomal subunits, but not 50S ribosomal subunits or 70S ribosomes.

The protein resides in the cytoplasm. Its function is as follows. One of several proteins that assist in the late maturation steps of the functional core of the 30S ribosomal subunit. Associates with free 30S ribosomal subunits (but not with 30S subunits that are part of 70S ribosomes or polysomes). Required for efficient processing of 16S rRNA. May interact with the 5'-terminal helix region of 16S rRNA. The protein is Ribosome-binding factor A of Mycoplasma pneumoniae (strain ATCC 29342 / M129 / Subtype 1) (Mycoplasmoides pneumoniae).